Consider the following 622-residue polypeptide: Chaperone protein HscA homolog (622 aa).

The protein belongs to the heat shock protein 70 family.

Its function is as follows. Chaperone involved in the maturation of iron-sulfur cluster-containing proteins. Has a low intrinsic ATPase activity which is markedly stimulated by HscB. The protein is Chaperone protein HscA homolog of Burkholderia thailandensis (strain ATCC 700388 / DSM 13276 / CCUG 48851 / CIP 106301 / E264).